We begin with the raw amino-acid sequence, 361 residues long: MSNLPEAKLDVLLAHHASLEAQLLGEVAANDYVRITRELSELNPLVEAVKAYREVRDELGDIDDLLEDPATDPEMRAMAEAERDALDAHREDLIQQIRVALLPKDAMDERNVMLEIRAGTGGDEASLFAGDLFRMYEKFAALQGWSVEVISASEGTVGGFKEIIAEVKGRGAFAKLKFESGVHRVQRVPDTETQGRIHTSAATVAVLPEVEEVDVDIKPDDLKIDTMRAQGAGGQHVNKTESAIRITHLPTGIVVMMQDSRSQHKNRASAMNILRSRIYDAEQQRIDSARSAERKQKVGSGDRSERIRTYNFPQGRVTDHRINLTLYKLPQVIAGEALGELIDALTTEHQVAQLAAQGHAA.

An N5-methylglutamine modification is found at glutamine 235. A disordered region spans residues 286-305 (IDSARSAERKQKVGSGDRSE).

Belongs to the prokaryotic/mitochondrial release factor family. Methylated by PrmC. Methylation increases the termination efficiency of RF1.

Its subcellular location is the cytoplasm. Peptide chain release factor 1 directs the termination of translation in response to the peptide chain termination codons UAG and UAA. The chain is Peptide chain release factor 1 from Rhodopseudomonas palustris (strain HaA2).